We begin with the raw amino-acid sequence, 183 residues long: Adenine phosphoribosyltransferase (183 aa).

The protein belongs to the purine/pyrimidine phosphoribosyltransferase family. Homodimer.

The protein resides in the cytoplasm. The catalysed reaction is AMP + diphosphate = 5-phospho-alpha-D-ribose 1-diphosphate + adenine. The protein operates within purine metabolism; AMP biosynthesis via salvage pathway; AMP from adenine: step 1/1. In terms of biological role, catalyzes a salvage reaction resulting in the formation of AMP, that is energically less costly than de novo synthesis. In Citrobacter koseri (strain ATCC BAA-895 / CDC 4225-83 / SGSC4696), this protein is Adenine phosphoribosyltransferase.